Consider the following 452-residue polypeptide: CASP-like protein 4A1 (452 aa).

Positions 1 to 17 are enriched in basic and acidic residues; the sequence is MGLRDSLKEREDRRSSE. Disordered regions lie at residues 1 to 39, 71 to 147, and 164 to 283; these read MGLR…RKES, RAGP…ARSS, and AKYV…VQFR. At 1–305 the chain is on the cytoplasmic side; it reads MGLRDSLKER…KRRAAAMQRT (305 aa). A compositionally biased stretch (polar residues) spans 25–34; that stretch reads SWMTRESTTG. Composition is skewed to low complexity over residues 105–126 and 190–205; these read QAQA…TGSG and GWYS…AAPP. Pro residues predominate over residues 211–272; that stretch reads DPPPAPPRRQ…TAPAPAPVPA (62 aa). The chain crosses the membrane as a helical span at residues 306 to 326; that stretch reads ALLARGAAAGLCLAALAVLAA. Topologically, residues 327 to 347 are extracellular; the sequence is DTRKGWARDSYSNYTQFRYSE. A glycan (N-linked (GlcNAc...) asparagine) is linked at asparagine 339. A helical transmembrane segment spans residues 348 to 368; the sequence is AVNVIGFIYSVFQFVALVELM. Topologically, residues 369–389 are cytoplasmic; that stretch reads RRNKHLIPHPKRDLFDFTMDQ. Residues 390–406 form a helical membrane-spanning segment; sequence VLTYLLISSSSSATARV. Residues 407–423 lie on the Extracellular side of the membrane; sequence SDLIDNWGSDPFPSMAN. An N-linked (GlcNAc...) asparagine glycan is attached at asparagine 423. A helical membrane pass occupies residues 424–444; sequence GSIAISFLAFAVFAICSLISA. The Cytoplasmic portion of the chain corresponds to 445–452; sequence YNLFRRDV.

The protein belongs to the Casparian strip membrane proteins (CASP) family. Homodimer and heterodimers.

The protein resides in the cell membrane. This Sorghum bicolor (Sorghum) protein is CASP-like protein 4A1.